Reading from the N-terminus, the 635-residue chain is tRNA uridine 5-carboxymethylaminomethyl modification enzyme MnmG (635 aa).

15–20 (GAGHAG) contacts FAD. NAD(+) is bound at residue 276–290 (GPRYCPSIEDKIVRF).

Belongs to the MnmG family. Homodimer. Heterotetramer of two MnmE and two MnmG subunits. The cofactor is FAD.

The protein resides in the cytoplasm. In terms of biological role, NAD-binding protein involved in the addition of a carboxymethylaminomethyl (cmnm) group at the wobble position (U34) of certain tRNAs, forming tRNA-cmnm(5)s(2)U34. In Streptococcus sanguinis (strain SK36), this protein is tRNA uridine 5-carboxymethylaminomethyl modification enzyme MnmG.